The chain runs to 354 residues: Peptide chain release factor 1 (354 aa).

The residue at position 233 (Q233) is an N5-methylglutamine.

Belongs to the prokaryotic/mitochondrial release factor family. Post-translationally, methylated by PrmC. Methylation increases the termination efficiency of RF1.

The protein localises to the cytoplasm. Functionally, peptide chain release factor 1 directs the termination of translation in response to the peptide chain termination codons UAG and UAA. The sequence is that of Peptide chain release factor 1 from Clostridioides difficile (strain 630) (Peptoclostridium difficile).